A 482-amino-acid chain; its full sequence is Glutamyl-tRNA(Gln) amidotransferase subunit A (482 aa).

Active-site charge relay system residues include Lys74 and Ser149. The active-site Acyl-ester intermediate is Ser173.

The protein belongs to the amidase family. GatA subfamily. As to quaternary structure, heterotrimer of A, B and C subunits.

It catalyses the reaction L-glutamyl-tRNA(Gln) + L-glutamine + ATP + H2O = L-glutaminyl-tRNA(Gln) + L-glutamate + ADP + phosphate + H(+). In terms of biological role, allows the formation of correctly charged Gln-tRNA(Gln) through the transamidation of misacylated Glu-tRNA(Gln) in organisms which lack glutaminyl-tRNA synthetase. The reaction takes place in the presence of glutamine and ATP through an activated gamma-phospho-Glu-tRNA(Gln). The sequence is that of Glutamyl-tRNA(Gln) amidotransferase subunit A from Prochlorococcus marinus (strain AS9601).